Reading from the N-terminus, the 308-residue chain is Glutaminase 1 (308 aa).

Positions 64, 116, 161, 168, 192, 244, and 262 each coordinate substrate.

This sequence belongs to the glutaminase family. As to quaternary structure, homotetramer.

It catalyses the reaction L-glutamine + H2O = L-glutamate + NH4(+). The sequence is that of Glutaminase 1 from Halalkalibacterium halodurans (strain ATCC BAA-125 / DSM 18197 / FERM 7344 / JCM 9153 / C-125) (Bacillus halodurans).